Consider the following 448-residue polypeptide: Histidine--tRNA ligase (448 aa).

Belongs to the class-II aminoacyl-tRNA synthetase family. Homodimer.

Its subcellular location is the cytoplasm. It carries out the reaction tRNA(His) + L-histidine + ATP = L-histidyl-tRNA(His) + AMP + diphosphate + H(+). The polypeptide is Histidine--tRNA ligase (Treponema denticola (strain ATCC 35405 / DSM 14222 / CIP 103919 / JCM 8153 / KCTC 15104)).